A 104-amino-acid polypeptide reads, in one-letter code: Transcription and mRNA export factor ENY2 (104 aa).

The segment covering methionine 1–glutamine 14 has biased composition (basic and acidic residues). The segment at methionine 1–glutamine 22 is disordered.

This sequence belongs to the ENY2 family. As to quaternary structure, component of the nuclear pore complex (NPC)-associated TREX-2 complex (transcription and export complex 2). Component of the SAGA transcription coactivator-HAT complex. Within the SAGA complex, participates in a subcomplex of SAGA called the DUB module (deubiquitination module).

It localises to the nucleus. Its subcellular location is the nucleoplasm. Functionally, involved in mRNA export coupled transcription activation by association with both the TREX-2 and the SAGA complexes. The transcription regulatory histone acetylation (HAT) complex SAGA is a multiprotein complex that activates transcription by remodeling chromatin and mediating histone acetylation and deubiquitination. Within the SAGA complex, participates in a subcomplex that specifically deubiquitinates histones. The SAGA complex is recruited to specific gene promoters by activators, where it is required for transcription. The TREX-2 complex functions in docking export-competent ribonucleoprotein particles (mRNPs) to the nuclear entrance of the nuclear pore complex (nuclear basket). TREX-2 participates in mRNA export and accurate chromatin positioning in the nucleus by tethering genes to the nuclear periphery. The sequence is that of Transcription and mRNA export factor ENY2 from Ciona intestinalis (Transparent sea squirt).